The following is a 718-amino-acid chain: MAAPPGEAPLTAATNIEPFYVLHKGGAAASSSSSSAPSLPSSGRARRRIDVSGLASPNPKPGKRSRDDDAAEDDDDDELYERLRLDAFHRVWSKIQSTINEVLRGISLKLFDQVLRWVQESFSAVRSIARPSAAEVRQPYPLLTDVICRKIPTAFVLTKNAEFVDDITTFRDLAEYLESNGCHLAKLSATELSEKNGVGCCFRSLLRQLLSDVPDVADIFALASWYSAAENYDQPIVVVIDDLEQCSGDVLGELVMMLSEWVIKIPIFFVMGIATTLDAPRKLLSSEDLQRLEPCKLTLGSPSDRMNALVEAILVKPCAGFCISHEVAVFLRNYFFKHDGTITSFISALKLACSKHFSVEPLSFLCMGMLEEDRENFWHDKFNALPQELRKYASGLPSCTREKDSTKSGDNMVDGLSELMNIQKDWSSVLLCLYEAGKHGKVQLLDIFCEAVNPDLHTQKAPNLPNEKSGTSRRFIDQVMDTIRYLPVETLFCLLEVWSIHLNGMDKITNKVKELQSTTISTDSVRITKDKWPRRSTNSTGNSTVALNDKVAMLLDDVTRKFLVSVECLPFHEIVCFKNVSILQSALIGNPRRMVQLDLVKSHKHLKCSCCRKNGIAVLASMHDTSIMCNLAQEYGDVINLHDWYISFDGIINSVHSKIKRKPHTSPSKKKSKPVAAESEAMIQARFCRAVTELQITGLLRMPSKRRPDLVQRIAFGL.

Over residues 26-43 the composition is skewed to low complexity; that stretch reads GAAASSSSSSAPSLPSSG. Residues 26–75 are disordered; it reads GAAASSSSSSAPSLPSSGRARRRIDVSGLASPNPKPGKRSRDDDAAEDDD. Residues 659–666 carry the Nuclear localization signal motif; the sequence is IKRKPHTS.

The protein belongs to the ORC3 family. In terms of assembly, component of the origin recognition complex (ORC) composed of at least ORC1, ORC2, ORC3, ORC4, ORC5 and ORC6. ORC is regulated in a cell-cycle and development dependent manner. It is sequentially assembled at the exit from anaphase of mitosis and disassembled as cells enter S phase. Expressed at low levels in the shoot apical meristem (SAM), leaves, ears and roots (including root tips).

Its subcellular location is the nucleus. Functionally, component of the origin recognition complex (ORC) that binds origins of replication. DNA-binding is ATP-dependent. The specific DNA sequences that define origins of replication have not been identified yet. This chain is Origin of replication complex subunit 3, found in Oryza sativa subsp. japonica (Rice).